Here is a 511-residue protein sequence, read N- to C-terminus: 2,3-bisphosphoglycerate-independent phosphoglycerate mutase (511 aa).

Positions 14 and 64 each coordinate Mn(2+). Residue Ser-64 is the Phosphoserine intermediate of the active site. Residues His-125, 155–156, Arg-187, Arg-193, 259–262, and Lys-333 contribute to the substrate site; these read RD and RADR. Positions 400, 404, 441, 442, and 460 each coordinate Mn(2+).

This sequence belongs to the BPG-independent phosphoglycerate mutase family. In terms of assembly, monomer. Mn(2+) serves as cofactor.

It carries out the reaction (2R)-2-phosphoglycerate = (2R)-3-phosphoglycerate. The protein operates within carbohydrate degradation; glycolysis; pyruvate from D-glyceraldehyde 3-phosphate: step 3/5. Catalyzes the interconversion of 2-phosphoglycerate and 3-phosphoglycerate. The polypeptide is 2,3-bisphosphoglycerate-independent phosphoglycerate mutase (Pseudomonas putida (strain GB-1)).